Reading from the N-terminus, the 612-residue chain is RNA-binding protein MRN1 (612 aa).

Low complexity predominate over residues 1 to 28 (MVVSYNNNNNNNNNNNNNNISNNNNNNN). Disordered stretches follow at residues 1 to 57 (MVVS…TYAS) and 105 to 125 (PTQFQTKQRNDSQQQRFSQEQ). 2 stretches are compositionally biased toward polar residues: residues 42–57 (YQQSSSSGPYQETYAS) and 115–125 (DSQQQRFSQEQ). 4 consecutive RRM domains span residues 201 to 274 (RTVY…WGKP), 292 to 379 (RNVY…KTQQ), 431 to 504 (RTVY…WGKH), and 522 to 602 (RNVY…FGKD).

It is found in the cytoplasm. RNA-binding protein that binds specific categories of mRNAs, including those that contain upstream open reading frames (uORFs) and internal ribosome entry sites (IRES). Probably involved in translational regulation. In Saccharomyces cerevisiae (strain ATCC 204508 / S288c) (Baker's yeast), this protein is RNA-binding protein MRN1 (MRN1).